Here is a 644-residue protein sequence, read N- to C-terminus: Chaperone protein DnaK (644 aa).

T199 bears the Phosphothreonine; by autocatalysis mark. The interval 605–644 (KKSSEGQAAQGQTQSQESTKPVEEGVVDAEFEEVKEEDKK) is disordered. The span at 609–623 (EGQAAQGQTQSQEST) shows a compositional bias: polar residues. Acidic residues predominate over residues 629–644 (GVVDAEFEEVKEEDKK).

This sequence belongs to the heat shock protein 70 family.

Acts as a chaperone. The sequence is that of Chaperone protein DnaK from Legionella pneumophila (strain Paris).